The chain runs to 327 residues: Polyprenyl transferase andD (327 aa).

Transmembrane regions (helical) follow at residues 49–69 (LGYI…ASIA), 81–101 (ITLL…WDDI), 140–160 (FAFV…MLFF), 174–194 (PQLI…GLNL), 201–221 (IPMA…DIIY), 244–264 (CLDA…VIAG), 271–291 (APFF…LAMA), and 307–327 (CCTS…VWRS).

It belongs to the UbiA prenyltransferase family. Requires Mg(2+) as cofactor.

It is found in the membrane. It functions in the pathway secondary metabolite biosynthesis; terpenoid biosynthesis. In terms of biological role, polyprenyl transferase; part of the gene cluster that mediates the biosynthesis of anditomin, a fungal meroterpenoid. The first step of the pathway is the synthesis of 3,5-dimethylorsellinic acid (DMOA) by the polyketide synthase andM. DMOA is then converted to the phthalide compound 5,7-dihydroxy-4,6-dimethylphthalide (DHDMP) by the cytochrome P450 monooxygenase andK, which is further prenylated by the prenyltransferase andD to yield farnesyl-DHDMP. Further epoxidation by the FAD-dependent monooxygenase andE leads to epoxyfarnesyl-DHDMP. The next step involves the terpene cyclase andB that converts epoxyfarnesyl-DHDMP into preandiloid A through opening of the epoxide ring followed by the cyclization of the farnesyl moiety. Preandiloid A is in turn oxidized at the C-3 hydroxyl group to yield preandiloid B by the dehydrogenase andC. The dioxygenase andA is solely responsible for the dehydrogenation of preandiloid B leading to the enone preandiloid C, as well as for the intriguing structural rearrangement to generate the bicyclo[2.2.2]octane core, transforming preandiloid C into andiconin. FAD-binding monooxygenase andJ then produces andilesin D which is reduced by dehydrogenase andI to yield andilesin A. Action of acetyltransferase andG followed by a spontaneous acetate elimination leads then to andilesin B, which is in turn substrate of the short chain dehydrogenase andH to yield andilesin C. Finally, the dioxygenase andF catalyzes the transformation of andilesin C to anditomin. In Emericella variicolor (Aspergillus stellatus), this protein is Polyprenyl transferase andD.